The sequence spans 382 residues: UDP-4-amino-4-deoxy-L-arabinose--oxoglutarate aminotransferase (382 aa).

N6-(pyridoxal phosphate)lysine is present on Lys-183.

Belongs to the DegT/DnrJ/EryC1 family. ArnB subfamily. Homodimer. The cofactor is pyridoxal 5'-phosphate.

The enzyme catalyses UDP-4-amino-4-deoxy-beta-L-arabinose + 2-oxoglutarate = UDP-beta-L-threo-pentopyranos-4-ulose + L-glutamate. It participates in nucleotide-sugar biosynthesis; UDP-4-deoxy-4-formamido-beta-L-arabinose biosynthesis; UDP-4-deoxy-4-formamido-beta-L-arabinose from UDP-alpha-D-glucuronate: step 2/3. It functions in the pathway bacterial outer membrane biogenesis; lipopolysaccharide biosynthesis. Its function is as follows. Catalyzes the conversion of UDP-4-keto-arabinose (UDP-Ara4O) to UDP-4-amino-4-deoxy-L-arabinose (UDP-L-Ara4N). The modified arabinose is attached to lipid A and is required for resistance to polymyxin and cationic antimicrobial peptides. The sequence is that of UDP-4-amino-4-deoxy-L-arabinose--oxoglutarate aminotransferase from Pseudomonas aeruginosa (strain UCBPP-PA14).